We begin with the raw amino-acid sequence, 429 residues long: Cell cycle protein kinase spo4 (429 aa).

The 363-residue stretch at 40 to 402 (YHVVKLVGAG…KAKTALQHEF (363 aa)) folds into the Protein kinase domain. ATP contacts are provided by residues 46–54 (VGAGSFSSV) and lysine 95. The Proton acceptor role is filled by aspartate 182. Threonine 264 is subject to Phosphothreonine.

It belongs to the protein kinase superfamily. Ser/Thr protein kinase family. CDC7 subfamily. As to quaternary structure, interacts with spo6.

Its subcellular location is the nucleus. The enzyme catalyses L-seryl-[protein] + ATP = O-phospho-L-seryl-[protein] + ADP + H(+). It catalyses the reaction L-threonyl-[protein] + ATP = O-phospho-L-threonyl-[protein] + ADP + H(+). Functionally, required for the initiation of meiosis II and progression through anaphase II. The polypeptide is Cell cycle protein kinase spo4 (spo4) (Schizosaccharomyces pombe (strain 972 / ATCC 24843) (Fission yeast)).